The following is a 442-amino-acid chain: UDP-N-acetylmuramate--L-alanine ligase (442 aa).

109–115 (GAHGKTS) contributes to the ATP binding site.

Belongs to the MurCDEF family.

The protein resides in the cytoplasm. It carries out the reaction UDP-N-acetyl-alpha-D-muramate + L-alanine + ATP = UDP-N-acetyl-alpha-D-muramoyl-L-alanine + ADP + phosphate + H(+). Its pathway is cell wall biogenesis; peptidoglycan biosynthesis. In terms of biological role, cell wall formation. The chain is UDP-N-acetylmuramate--L-alanine ligase from Streptococcus pyogenes serotype M2 (strain MGAS10270).